Consider the following 529-residue polypeptide: Bifunctional purine biosynthesis protein PurH (529 aa).

The MGS-like domain occupies 1–148 (MQQRRPVRRA…KNHRDVAIVV (148 aa)). Lysine 287 carries the post-translational modification N6-acetyllysine.

It belongs to the PurH family.

It catalyses the reaction (6R)-10-formyltetrahydrofolate + 5-amino-1-(5-phospho-beta-D-ribosyl)imidazole-4-carboxamide = 5-formamido-1-(5-phospho-D-ribosyl)imidazole-4-carboxamide + (6S)-5,6,7,8-tetrahydrofolate. The enzyme catalyses IMP + H2O = 5-formamido-1-(5-phospho-D-ribosyl)imidazole-4-carboxamide. It functions in the pathway purine metabolism; IMP biosynthesis via de novo pathway; 5-formamido-1-(5-phospho-D-ribosyl)imidazole-4-carboxamide from 5-amino-1-(5-phospho-D-ribosyl)imidazole-4-carboxamide (10-formyl THF route): step 1/1. Its pathway is purine metabolism; IMP biosynthesis via de novo pathway; IMP from 5-formamido-1-(5-phospho-D-ribosyl)imidazole-4-carboxamide: step 1/1. In Escherichia coli O6:K15:H31 (strain 536 / UPEC), this protein is Bifunctional purine biosynthesis protein PurH.